The primary structure comprises 653 residues: Fructose-1,6-bisphosphatase class 3 (653 aa).

This sequence belongs to the FBPase class 3 family. Requires Mn(2+) as cofactor.

The catalysed reaction is beta-D-fructose 1,6-bisphosphate + H2O = beta-D-fructose 6-phosphate + phosphate. Its pathway is carbohydrate biosynthesis; gluconeogenesis. The protein is Fructose-1,6-bisphosphatase class 3 of Listeria monocytogenes serotype 4b (strain CLIP80459).